The primary structure comprises 368 residues: Xaa-Pro dipeptidase (368 aa).

Positions 223, 234, 298, 327, and 341 each coordinate Mn(2+).

This sequence belongs to the peptidase M24B family. The cofactor is Mn(2+).

The protein resides in the cytoplasm. The enzyme catalyses Xaa-L-Pro dipeptide + H2O = an L-alpha-amino acid + L-proline. This chain is Xaa-Pro dipeptidase (pepQ), found in Lactobacillus helveticus (Lactobacillus suntoryeus).